Consider the following 467-residue polypeptide: Dimethylamine methyltransferase MtbB1 (467 aa).

Position 356 (pyrrolysine 356) is a non-standard amino acid, pyrrolysine.

Belongs to the dimethylamine methyltransferase family.

It carries out the reaction Co(I)-[dimethylamine-specific corrinoid protein] + dimethylamine + H(+) = methyl-Co(III)-[dimethylamine-specific corrinoid protein] + methylamine. It functions in the pathway one-carbon metabolism; methanogenesis from dimethylamine. Catalyzes the transfer of a methyl group from dimethylamine to the corrinoid cofactor of MtbC. This Methanosarcina barkeri (strain Fusaro / DSM 804) protein is Dimethylamine methyltransferase MtbB1 (mtbB1).